Consider the following 599-residue polypeptide: Aspartate--tRNA(Asp/Asn) ligase (599 aa).

Glu169 contacts L-aspartate. Positions 193–196 (QLFK) are aspartate. Arg215 contacts L-aspartate. ATP is bound by residues 215-217 (RDE) and Gln224. His447 provides a ligand contact to L-aspartate. Glu481 contacts ATP. An L-aspartate-binding site is contributed by Arg488. Position 533 to 536 (533 to 536 (GWDR)) interacts with ATP.

Belongs to the class-II aminoacyl-tRNA synthetase family. Type 1 subfamily. Homodimer.

It localises to the cytoplasm. The catalysed reaction is tRNA(Asx) + L-aspartate + ATP = L-aspartyl-tRNA(Asx) + AMP + diphosphate. Aspartyl-tRNA synthetase with relaxed tRNA specificity since it is able to aspartylate not only its cognate tRNA(Asp) but also tRNA(Asn). Reaction proceeds in two steps: L-aspartate is first activated by ATP to form Asp-AMP and then transferred to the acceptor end of tRNA(Asp/Asn). This chain is Aspartate--tRNA(Asp/Asn) ligase, found in Pseudarthrobacter chlorophenolicus (strain ATCC 700700 / DSM 12829 / CIP 107037 / JCM 12360 / KCTC 9906 / NCIMB 13794 / A6) (Arthrobacter chlorophenolicus).